The sequence spans 301 residues: Troponin T, cardiac muscle (301 aa).

The span at Met-1 to Val-72 shows a compositional bias: acidic residues. Disordered regions lie at residues Met-1–Arg-97 and Asn-125–Ile-224. Ser-2 is modified (N-acetylserine). Phosphoserine; by CK2 is present on Ser-2. Composition is skewed to basic and acidic residues over residues Asn-125–Arg-186 and Gln-206–Ile-224. A Phosphothreonine; by PKC/PRKCA modification is found at Thr-207. Ser-211 bears the Phosphoserine; by PKC/PRKCA mark. Position 216 is a phosphothreonine; by PKC/PRKCA and RAF1 (Thr-216). Phosphothreonine; by PKC/PRKCA is present on Thr-297.

Belongs to the troponin T family. Post-translationally, phosphorylation at Thr-216 by PRKCA induces significant reduction in myofilament calcium sensitivity and actomyosin ATPase activity.

Troponin T is the tropomyosin-binding subunit of troponin, the thin filament regulatory complex which confers calcium-sensitivity to striated muscle actomyosin ATPase activity. The sequence is that of Troponin T, cardiac muscle (Tnnt2) from Mus musculus (Mouse).